Reading from the N-terminus, the 557-residue chain is MAAQGFLLIATFLLVLMVLARPLGSGLARLINDIPLPGTTGVERVLFSALGVSDREMNWKQYLSAILGLNMLGLAVLFFMLLGQHYLPLNPQQLPGLSWDLALNTAVSFVTNTNWQSYSGETTLSYFSQMAGLTVQNFLSAASGIAVIFAFIRAFTRQSMSTLGNAWVDLLRITLWVLVPVALLIALFFIQQGALQNFLPYQAVNTVEGAKQLLPMGPVASQEAIKMLGTNGGGFFNANSSHPFENPTTLTNFVQMLAIFLIPTALCFAFGEVAGDRRQGRMLLWAMSVIFVICVGVVMWAEVQGNPHLLALGADSSINMEGKESRFGVLVSSLFAVVTTAASCGAVIAMHDSFTALGGMVPMWLMQIGEVVFGGVGSGLYGMMLFVLLAVFIAGLMIGRTPEYLGKKIDVREMKLTALAILVTPTLVLMGAALAMMTDAGRSAMLNPGPHGFSEVLYAVSSAANNNGSAFAGLSANSPFWNCLLAFCMFVGRFGVIIPVMAIAGSLVSKKSQPASSGTLPTHGPLFVGLLIGTVLLVGALTFIPALALGPVAEYLS.

Transmembrane regions (helical) follow at residues 5 to 25, 63 to 83, 132 to 152, 170 to 190, 253 to 273, 283 to 303, 329 to 349, 356 to 376, 379 to 399, 416 to 436, 484 to 504, and 526 to 546; these read GFLLIATFLLVLMVLARPLGS, LSAILGLNMLGLAVLFFMLLG, GLTVQNFLSAASGIAVIFAFI, LLRITLWVLVPVALLIALFFI, FVQMLAIFLIPTALCFAFGEV, LLWAMSVIFVICVGVVMWAEV, VLVSSLFAVVTTAASCGAVIA, ALGGMVPMWLMQIGEVVFGGV, GLYGMMLFVLLAVFIAGLMIG, LTALAILVTPTLVLMGAALAM, LLAFCMFVGRFGVIIPVMAIA, and LFVGLLIGTVLLVGALTFIPA.

Belongs to the KdpA family. The system is composed of three essential subunits: KdpA, KdpB and KdpC.

The protein localises to the cell inner membrane. In terms of biological role, part of the high-affinity ATP-driven potassium transport (or Kdp) system, which catalyzes the hydrolysis of ATP coupled with the electrogenic transport of potassium into the cytoplasm. This subunit binds the periplasmic potassium ions and delivers the ions to the membrane domain of KdpB through an intramembrane tunnel. This is Potassium-transporting ATPase potassium-binding subunit from Escherichia coli (strain SMS-3-5 / SECEC).